The chain runs to 388 residues: Chalcone synthase DIV (388 aa).

Residue Cys-164 is part of the active site.

The protein belongs to the thiolase-like superfamily. Chalcone/stilbene synthases family.

The catalysed reaction is (E)-4-coumaroyl-CoA + 3 malonyl-CoA + 3 H(+) = 2',4,4',6'-tetrahydroxychalcone + 3 CO2 + 4 CoA. Its pathway is secondary metabolite biosynthesis; flavonoid biosynthesis. In terms of biological role, the primary product of this enzyme is 4,2',4',6'-tetrahydroxychalcone (also termed naringenin-chalcone or chalcone) which can under specific conditions spontaneously isomerize into naringenin. This chain is Chalcone synthase DIV (CHS-DIV), found in Ipomoea batatas (Sweet potato).